A 151-amino-acid polypeptide reads, in one-letter code: Transcriptional repressor NrdR (151 aa).

A zinc finger spans residues 3 to 34; the sequence is CPYCAYGESKVVDSRSTEDGSSIRRRRECLKC. The 91-residue stretch at 49 to 139 folds into the ATP-cone domain; sequence ILVIKKNMSR…VYRQFKDINT (91 aa).

This sequence belongs to the NrdR family. The cofactor is Zn(2+).

Negatively regulates transcription of bacterial ribonucleotide reductase nrd genes and operons by binding to NrdR-boxes. The polypeptide is Transcriptional repressor NrdR (Clostridium botulinum (strain 657 / Type Ba4)).